The primary structure comprises 212 residues: Imidazole glycerol phosphate synthase subunit HisH (212 aa).

In terms of domain architecture, Glutamine amidotransferase type-1 spans Leu3–Val211. Catalysis depends on Cys81, which acts as the Nucleophile. Catalysis depends on residues His186 and Glu188.

In terms of assembly, heterodimer of HisH and HisF.

It localises to the cytoplasm. It catalyses the reaction 5-[(5-phospho-1-deoxy-D-ribulos-1-ylimino)methylamino]-1-(5-phospho-beta-D-ribosyl)imidazole-4-carboxamide + L-glutamine = D-erythro-1-(imidazol-4-yl)glycerol 3-phosphate + 5-amino-1-(5-phospho-beta-D-ribosyl)imidazole-4-carboxamide + L-glutamate + H(+). The catalysed reaction is L-glutamine + H2O = L-glutamate + NH4(+). It functions in the pathway amino-acid biosynthesis; L-histidine biosynthesis; L-histidine from 5-phospho-alpha-D-ribose 1-diphosphate: step 5/9. Its function is as follows. IGPS catalyzes the conversion of PRFAR and glutamine to IGP, AICAR and glutamate. The HisH subunit catalyzes the hydrolysis of glutamine to glutamate and ammonia as part of the synthesis of IGP and AICAR. The resulting ammonia molecule is channeled to the active site of HisF. In Microcystis aeruginosa (strain NIES-843 / IAM M-2473), this protein is Imidazole glycerol phosphate synthase subunit HisH.